The chain runs to 290 residues: Nucleotide-binding protein Aave_3603 (290 aa).

ATP is bound at residue 13-20 (GMSGSGKS). Residue 62–65 (DVRS) coordinates GTP.

This sequence belongs to the RapZ-like family.

In terms of biological role, displays ATPase and GTPase activities. The sequence is that of Nucleotide-binding protein Aave_3603 from Paracidovorax citrulli (strain AAC00-1) (Acidovorax citrulli).